The chain runs to 568 residues: Urease subunit alpha (568 aa).

Residues histidine 134, histidine 136, and lysine 217 each coordinate Ni(2+). Lysine 217 bears the N6-carboxylysine mark. Histidine 219 provides a ligand contact to substrate. Histidine 246 and histidine 272 together coordinate Ni(2+). Histidine 320 functions as the Proton donor in the catalytic mechanism. Residue aspartate 360 coordinates Ni(2+).

Belongs to the metallo-dependent hydrolases superfamily. Urease alpha subunit family. In terms of assembly, heterotrimer of UreA (gamma), UreB (beta) and UreC (alpha) subunits. Three heterotrimers associate to form the active enzyme. The cofactor is Ni cation. Post-translationally, carboxylation allows a single lysine to coordinate two nickel ions.

The protein resides in the cytoplasm. It carries out the reaction urea + 2 H2O + H(+) = hydrogencarbonate + 2 NH4(+). It functions in the pathway nitrogen metabolism; urea degradation; CO(2) and NH(3) from urea (urease route): step 1/1. The sequence is that of Urease subunit alpha from Marinomonas sp. (strain MWYL1).